The sequence spans 176 residues: MTNIRKTHPLAKIINNSLIDLPAPSNISSWWNFGSLLGICLGLQILTGLFLAMHYTADTATAFNSVTHICRDVNYGWVLRYLHANGASMFFICLYLHVGRGIYYGSYLYKETWNMGVVLLFAVMATAFMGYVLPWGQMSFWGATVITNLLSAIPYIGNDLVEWIWGGFSVDKATLT.

The next 3 helical transmembrane spans lie at F33 to M53, W77 to V98, and W113 to L133. 2 residues coordinate heme b: H83 and H97.

This sequence belongs to the cytochrome b family. The cytochrome bc1 complex contains 11 subunits: 3 respiratory subunits (MT-CYB, CYC1 and UQCRFS1), 2 core proteins (UQCRC1 and UQCRC2) and 6 low-molecular weight proteins (UQCRH/QCR6, UQCRB/QCR7, UQCRQ/QCR8, UQCR10/QCR9, UQCR11/QCR10 and a cleavage product of UQCRFS1). This cytochrome bc1 complex then forms a dimer. Heme b is required as a cofactor.

The protein resides in the mitochondrion inner membrane. In terms of biological role, component of the ubiquinol-cytochrome c reductase complex (complex III or cytochrome b-c1 complex) that is part of the mitochondrial respiratory chain. The b-c1 complex mediates electron transfer from ubiquinol to cytochrome c. Contributes to the generation of a proton gradient across the mitochondrial membrane that is then used for ATP synthesis. In Nycticeius humeralis (Evening bat), this protein is Cytochrome b (MT-CYB).